The following is a 417-amino-acid chain: Glutamyl-tRNA reductase (417 aa).

Substrate contacts are provided by residues 49 to 52 (TCNR), Ser-105, 110 to 112 (ETQ), and Gln-116. Cys-50 acts as the Nucleophile in catalysis. 185–190 (GAGEMI) serves as a coordination point for NADP(+).

The protein belongs to the glutamyl-tRNA reductase family. As to quaternary structure, homodimer.

It carries out the reaction (S)-4-amino-5-oxopentanoate + tRNA(Glu) + NADP(+) = L-glutamyl-tRNA(Glu) + NADPH + H(+). The protein operates within porphyrin-containing compound metabolism; protoporphyrin-IX biosynthesis; 5-aminolevulinate from L-glutamyl-tRNA(Glu): step 1/2. Functionally, catalyzes the NADPH-dependent reduction of glutamyl-tRNA(Glu) to glutamate 1-semialdehyde (GSA). The sequence is that of Glutamyl-tRNA reductase from Chromobacterium violaceum (strain ATCC 12472 / DSM 30191 / JCM 1249 / CCUG 213 / NBRC 12614 / NCIMB 9131 / NCTC 9757 / MK).